The chain runs to 434 residues: Eukaryotic translation initiation factor 3 subunit E-2 (434 aa).

A PCI domain is found at 219–392 (FFNHPKGRDL…GHVVMGTQPL (174 aa)).

This sequence belongs to the eIF-3 subunit E family. Component of the eukaryotic translation initiation factor 3 (eIF-3) complex. The eIF-3 complex interacts with pix. Interacts with mxt.

Its subcellular location is the cytoplasm. Its function is as follows. Component of the eukaryotic translation initiation factor 3 (eIF-3) complex, which is involved in protein synthesis of a specialized repertoire of mRNAs and, together with other initiation factors, stimulates binding of mRNA and methionyl-tRNAi to the 40S ribosome. The eIF-3 complex specifically targets and initiates translation of a subset of mRNAs involved in cell proliferation. This Drosophila willistoni (Fruit fly) protein is Eukaryotic translation initiation factor 3 subunit E-2 (eIF3-S6-2).